The sequence spans 105 residues: Phosphoribosyl-AMP cyclohydrolase (105 aa).

Aspartate 72 is a Mg(2+) binding site. Cysteine 73 is a Zn(2+) binding site. Residues aspartate 74 and aspartate 76 each contribute to the Mg(2+) site. Positions 89 and 96 each coordinate Zn(2+).

This sequence belongs to the PRA-CH family. Homodimer. Requires Mg(2+) as cofactor. It depends on Zn(2+) as a cofactor.

The protein localises to the cytoplasm. It carries out the reaction 1-(5-phospho-beta-D-ribosyl)-5'-AMP + H2O = 1-(5-phospho-beta-D-ribosyl)-5-[(5-phospho-beta-D-ribosylamino)methylideneamino]imidazole-4-carboxamide. Its pathway is amino-acid biosynthesis; L-histidine biosynthesis; L-histidine from 5-phospho-alpha-D-ribose 1-diphosphate: step 3/9. Functionally, catalyzes the hydrolysis of the adenine ring of phosphoribosyl-AMP. The protein is Phosphoribosyl-AMP cyclohydrolase of Listeria monocytogenes serotype 4a (strain HCC23).